Here is a 480-residue protein sequence, read N- to C-terminus: UDP-glucose 6-dehydrogenase 2 (480 aa).

NAD(+) is bound by residues 8-13 (GAGYVG), aspartate 33, arginine 38, 86-90 (VNTPT), 127-128 (ST), and glutamate 161. Substrate contacts are provided by residues 157-161 (EFLAE), 216-223 (KLAANAFL), and 256-269 (RIGP…VGFG). The active-site Nucleophile is cysteine 272. Position 272 to 275 (272 to 275 (CFQK)) interacts with NAD(+). A substrate-binding site is contributed by 334–335 (FK). Residue arginine 342 participates in NAD(+) binding. Substrate is bound at residue arginine 447.

This sequence belongs to the UDP-glucose/GDP-mannose dehydrogenase family. In terms of tissue distribution, preferentially expressed in roots.

The enzyme catalyses UDP-alpha-D-glucose + 2 NAD(+) + H2O = UDP-alpha-D-glucuronate + 2 NADH + 3 H(+). It functions in the pathway nucleotide-sugar biosynthesis; UDP-alpha-D-glucuronate biosynthesis; UDP-alpha-D-glucuronate from UDP-alpha-D-glucose: step 1/1. Its activity is regulated as follows. Inhibited by UDP-xylose. Involved in the biosynthesis of UDP-glucuronic acid (UDP-GlcA), providing nucleotide sugars for cell-wall polymers. Required for the formation of cell wall ingrowths on the outer cell walls of nematode-induced syncytia. This is UDP-glucose 6-dehydrogenase 2 (UGD2) from Arabidopsis thaliana (Mouse-ear cress).